Consider the following 284-residue polypeptide: UPF0761 membrane protein IL2447 (284 aa).

The next 6 membrane-spanning stretches (helical) occupy residues 41 to 61 (MLSLVPLLVVMFTVFSAFPMF), 98 to 118 (MTAIGVGFLFIVAIMLMSAID), 137 to 157 (FAVYWMLLTLGPVLIGSGLAA), 178 to 198 (FVLWFVPIVTSFVFFVLMYQL), 214 to 234 (VIAALLFELSKQLFSLYITFF), and 247 to 267 (IPILIVWIYLSWLIVLIGAVL).

It belongs to the UPF0761 family.

The protein localises to the cell inner membrane. The protein is UPF0761 membrane protein IL2447 of Idiomarina loihiensis (strain ATCC BAA-735 / DSM 15497 / L2-TR).